Consider the following 271-residue polypeptide: Putative pyruvate, phosphate dikinase regulatory protein (271 aa).

151-158 (GISRTSKT) contributes to the ADP binding site.

This sequence belongs to the pyruvate, phosphate/water dikinase regulatory protein family. PDRP subfamily.

The catalysed reaction is N(tele)-phospho-L-histidyl/L-threonyl-[pyruvate, phosphate dikinase] + ADP = N(tele)-phospho-L-histidyl/O-phospho-L-threonyl-[pyruvate, phosphate dikinase] + AMP + H(+). It carries out the reaction N(tele)-phospho-L-histidyl/O-phospho-L-threonyl-[pyruvate, phosphate dikinase] + phosphate + H(+) = N(tele)-phospho-L-histidyl/L-threonyl-[pyruvate, phosphate dikinase] + diphosphate. Bifunctional serine/threonine kinase and phosphorylase involved in the regulation of the pyruvate, phosphate dikinase (PPDK) by catalyzing its phosphorylation/dephosphorylation. This chain is Putative pyruvate, phosphate dikinase regulatory protein, found in Streptococcus uberis (strain ATCC BAA-854 / 0140J).